A 395-amino-acid polypeptide reads, in one-letter code: MAKETFKREKPHVNIGTIGHVDHGKTTLTAAITDILSKKGLAQAKKYDEIDGAPEEKERGITINTAHVEYETANRHYAHVDCPGHADYVKNMITGAAQMDGAILVVAASDGPMPQTKEHILLAAQVGVPKMVVFLNKVDLVDDEELLELVEIEVREELTKRGFDGDNTPIIKGSATGALAGEEKWVKEIENLMDAVDSYIPLPPRPVDLPFLMSVEDVFSITGRGTVATGRIERGRIKVGEPVEIVGLQESPLNSTVTGVEMFRKLLDEGEAGDNAGLLLRGVEKTQIRRGMVIVKPGSITPHTDFKGEVYVLSKDEGGRHTPFFNKYRPQFYFRTTDVTGEVELNAGTEMVMPGDNTNLTVKLIQPIAMEKGLKFAIREGGRTVGAGQVTEILK.

Residues Lys10–Arg205 form the tr-type G domain. The G1 stretch occupies residues Gly19 to Thr26. Gly19–Thr26 contributes to the GTP binding site. Thr26 contributes to the Mg(2+) binding site. The interval Gly60–Asn64 is G2. The G3 stretch occupies residues Asp81–Gly84. GTP-binding positions include Asp81–His85 and Asn136–Asp139. The segment at Asn136–Asp139 is G4. The tract at residues Ser174–Thr176 is G5.

This sequence belongs to the TRAFAC class translation factor GTPase superfamily. Classic translation factor GTPase family. EF-Tu/EF-1A subfamily. As to quaternary structure, monomer.

It is found in the cytoplasm. The catalysed reaction is GTP + H2O = GDP + phosphate + H(+). GTP hydrolase that promotes the GTP-dependent binding of aminoacyl-tRNA to the A-site of ribosomes during protein biosynthesis. This is Elongation factor Tu from Terrimonas ferruginea (Flavobacterium ferrugineum).